The chain runs to 311 residues: N-acetylmuramic acid 6-phosphate etherase (311 aa).

The SIS domain maps to 66 to 229 (VAVRMARGGR…STITMIRLGK (164 aa)). The active-site Proton donor is glutamate 94. The active site involves glutamate 125.

The protein belongs to the GCKR-like family. MurNAc-6-P etherase subfamily. In terms of assembly, homodimer.

It catalyses the reaction N-acetyl-D-muramate 6-phosphate + H2O = N-acetyl-D-glucosamine 6-phosphate + (R)-lactate. Its pathway is amino-sugar metabolism; N-acetylmuramate degradation. Functionally, specifically catalyzes the cleavage of the D-lactyl ether substituent of MurNAc 6-phosphate, producing GlcNAc 6-phosphate and D-lactate. This chain is N-acetylmuramic acid 6-phosphate etherase, found in Streptomyces coelicolor (strain ATCC BAA-471 / A3(2) / M145).